The following is a 337-amino-acid chain: Anthranilate phosphoribosyltransferase (337 aa).

Residues Gly81, 84 to 85, Ser89, 91 to 94, 109 to 117, and Ala121 contribute to the 5-phospho-alpha-D-ribose 1-diphosphate site; these read GD, NVST, and KHGNRAASS. Residue Gly81 coordinates anthranilate. Ser93 contacts Mg(2+). Asn112 contributes to the anthranilate binding site. Anthranilate is bound at residue Arg167. 2 residues coordinate Mg(2+): Asp226 and Glu227.

Belongs to the anthranilate phosphoribosyltransferase family. In terms of assembly, homodimer. Mg(2+) is required as a cofactor.

It catalyses the reaction N-(5-phospho-beta-D-ribosyl)anthranilate + diphosphate = 5-phospho-alpha-D-ribose 1-diphosphate + anthranilate. The protein operates within amino-acid biosynthesis; L-tryptophan biosynthesis; L-tryptophan from chorismate: step 2/5. In terms of biological role, catalyzes the transfer of the phosphoribosyl group of 5-phosphorylribose-1-pyrophosphate (PRPP) to anthranilate to yield N-(5'-phosphoribosyl)-anthranilate (PRA). The protein is Anthranilate phosphoribosyltransferase of Methylobacterium nodulans (strain LMG 21967 / CNCM I-2342 / ORS 2060).